The following is a 232-amino-acid chain: Orotidine 5'-phosphate decarboxylase (232 aa).

Substrate contacts are provided by residues Asp-11, Lys-33, 60–69, Thr-120, Arg-181, Gln-191, Gly-211, and Arg-212; that span reads DLKFHDIPTT. Residue Lys-62 is the Proton donor of the active site.

Belongs to the OMP decarboxylase family. Type 1 subfamily. Homodimer.

It carries out the reaction orotidine 5'-phosphate + H(+) = UMP + CO2. The protein operates within pyrimidine metabolism; UMP biosynthesis via de novo pathway; UMP from orotate: step 2/2. In terms of biological role, catalyzes the decarboxylation of orotidine 5'-monophosphate (OMP) to uridine 5'-monophosphate (UMP). This chain is Orotidine 5'-phosphate decarboxylase, found in Tolumonas auensis (strain DSM 9187 / NBRC 110442 / TA 4).